Here is a 603-residue protein sequence, read N- to C-terminus: Replication protein A 70 kDa DNA-binding subunit (603 aa).

The interval 131–152 (PKPAVTSNSKPIAKKEPSHNNN) is disordered. Ser-160 carries the post-translational modification Phosphoserine. The segment at residues 179-252 (WVIKARVTSK…QLKPANKQYS (74 aa)) is a DNA-binding region (OB). Ser-420 carries the phosphoserine modification. A C4-type zinc finger spans residues 464 to 486 (CPQSDCNKKVVDEGNDQFRCEKC).

This sequence belongs to the replication factor A protein 1 family. Component of the heterotrimeric canonical replication protein A complex (RPA).

It localises to the nucleus. Functionally, as part of the heterotrimeric replication protein A complex (RPA/RP-A), binds and stabilizes single-stranded DNA intermediates, that form during DNA replication or upon DNA stress. It prevents their reannealing and in parallel, recruits and activates different proteins and complexes involved in DNA metabolism. Thereby, it plays an essential role both in DNA replication and the cellular response to DNA damage. This is Replication protein A 70 kDa DNA-binding subunit from Drosophila melanogaster (Fruit fly).